A 456-amino-acid polypeptide reads, in one-letter code: Methylenetetrahydrofolate--tRNA-(uracil-5-)-methyltransferase TrmFO (456 aa).

7–12 (GAGLAG) provides a ligand contact to FAD.

Belongs to the MnmG family. TrmFO subfamily. Requires FAD as cofactor.

It localises to the cytoplasm. The enzyme catalyses uridine(54) in tRNA + (6R)-5,10-methylene-5,6,7,8-tetrahydrofolate + NADH + H(+) = 5-methyluridine(54) in tRNA + (6S)-5,6,7,8-tetrahydrofolate + NAD(+). It catalyses the reaction uridine(54) in tRNA + (6R)-5,10-methylene-5,6,7,8-tetrahydrofolate + NADPH + H(+) = 5-methyluridine(54) in tRNA + (6S)-5,6,7,8-tetrahydrofolate + NADP(+). Catalyzes the folate-dependent formation of 5-methyl-uridine at position 54 (M-5-U54) in all tRNAs. This is Methylenetetrahydrofolate--tRNA-(uracil-5-)-methyltransferase TrmFO from Synechococcus sp. (strain RCC307).